Reading from the N-terminus, the 388-residue chain is Formate-dependent phosphoribosylglycinamide formyltransferase (388 aa).

N(1)-(5-phospho-beta-D-ribosyl)glycinamide-binding positions include E21–L22 and E81. ATP is bound by residues R113, K154, S159–Q164, E193–I196, and E201. Positions K118–L306 constitute an ATP-grasp domain. Residues E265 and E277 each coordinate Mg(2+). N(1)-(5-phospho-beta-D-ribosyl)glycinamide-binding positions include D284, K352, and R359 to R360.

The protein belongs to the PurK/PurT family. Homodimer.

It carries out the reaction N(1)-(5-phospho-beta-D-ribosyl)glycinamide + formate + ATP = N(2)-formyl-N(1)-(5-phospho-beta-D-ribosyl)glycinamide + ADP + phosphate + H(+). Its pathway is purine metabolism; IMP biosynthesis via de novo pathway; N(2)-formyl-N(1)-(5-phospho-D-ribosyl)glycinamide from N(1)-(5-phospho-D-ribosyl)glycinamide (formate route): step 1/1. In terms of biological role, involved in the de novo purine biosynthesis. Catalyzes the transfer of formate to 5-phospho-ribosyl-glycinamide (GAR), producing 5-phospho-ribosyl-N-formylglycinamide (FGAR). Formate is provided by PurU via hydrolysis of 10-formyl-tetrahydrofolate. The protein is Formate-dependent phosphoribosylglycinamide formyltransferase of Nitratiruptor sp. (strain SB155-2).